The chain runs to 204 residues: Hydrophilin YNL190W (204 aa).

A signal peptide spans 1-20; it reads MKFSSVTAITLATVATVATA. The span at 35–46 shows a compositional bias: low complexity; the sequence is SDGSLTTTTSTH. A disordered region spans residues 35 to 179; the sequence is SDGSLTTTTS…ARKNNAAPGP (145 aa). A compositionally biased stretch (basic residues) spans 47–59; it reads TTHKYGKFNKTSK. N-linked (GlcNAc...) asparagine glycans are attached at residues Asn-55, Asn-64, Asn-75, Asn-84, Asn-95, Asn-104, Asn-115, Asn-124, Asn-135, Asn-144, and Asn-155. Positions 67–79 are enriched in basic residues; it reads GTHKYGKFNKTSK. A compositionally biased stretch (basic residues) spans 87–99; it reads GTHKYGKFNKTSK. The segment covering 107–119 has biased composition (basic residues); it reads GTHKYGKFNKTSK. A compositionally biased stretch (basic residues) spans 127 to 139; the sequence is GTHKYGKFNKTSK. A compositionally biased stretch (basic residues) spans 147–156; that stretch reads GTHKYGKFNK. The GPI-anchor amidated asparagine moiety is linked to residue Asn-174. Residues 175-204 constitute a propeptide, removed in mature form; the sequence is AAPGPSNFNSIKLFGVTAGSAAVAGALLLL.

It belongs to the PGA14 family. The GPI-anchor is attached to the protein in the endoplasmic reticulum and serves to target the protein to the cell surface. There, the glucosamine-inositol phospholipid moiety is cleaved off and the GPI-modified mannoprotein is covalently attached via its lipidless GPI glycan remnant to the 1,6-beta-glucan of the outer cell wall layer.

The protein localises to the secreted. The protein resides in the cell wall. Its subcellular location is the membrane. Hydrophilin which is essential to overcome the simple stress of the desiccation-rehydration process. The chain is Hydrophilin YNL190W from Saccharomyces cerevisiae (strain ATCC 204508 / S288c) (Baker's yeast).